The primary structure comprises 829 residues: Dipeptidyl peptidase family member 2 (829 aa).

The Cytoplasmic portion of the chain corresponds to 1–27 (MENDNYDVEEQGCSVFNGKHGYFARSC). A helical; Signal-anchor for type II membrane protein transmembrane segment spans residues 28 to 48 (CVVFILIICVIFVFSVIFTFM). The Extracellular portion of the chain corresponds to 49–829 (QNPINLNSDN…DCFKSNLDLL (781 aa)). N-linked (GlcNAc...) asparagine glycosylation is found at Asn-61, Asn-66, Asn-183, Asn-209, Asn-314, and Asn-359. Residues Cys-514 and Cys-533 are joined by a disulfide bond. The active-site Charge relay system is the Ser-691. A disulfide bond links Cys-711 and Cys-821. Asn-754 is a glycosylation site (N-linked (GlcNAc...) asparagine). Catalysis depends on charge relay system residues Asp-768 and His-800.

This sequence belongs to the peptidase S9B family. DPPIV subfamily.

It is found in the cell membrane. Removes N-terminal dipeptides sequentially from polypeptides. Essential for control of distal tip cell migration. In Caenorhabditis elegans, this protein is Dipeptidyl peptidase family member 2 (dpf-2).